The following is a 579-amino-acid chain: Isocitrate dehydrogenase kinase/phosphatase (579 aa).

ATP contacts are provided by residues 324–330 (ADGTPGM) and lysine 345. Aspartate 380 is an active-site residue.

Belongs to the AceK family.

The protein resides in the cytoplasm. It catalyses the reaction L-seryl-[isocitrate dehydrogenase] + ATP = O-phospho-L-seryl-[isocitrate dehydrogenase] + ADP + H(+). Functionally, bifunctional enzyme which can phosphorylate or dephosphorylate isocitrate dehydrogenase (IDH) on a specific serine residue. This is a regulatory mechanism which enables bacteria to bypass the Krebs cycle via the glyoxylate shunt in response to the source of carbon. When bacteria are grown on glucose, IDH is fully active and unphosphorylated, but when grown on acetate or ethanol, the activity of IDH declines drastically concomitant with its phosphorylation. This chain is Isocitrate dehydrogenase kinase/phosphatase, found in Xanthomonas campestris pv. campestris (strain 8004).